The chain runs to 276 residues: Large ribosomal subunit protein uL2 (276 aa).

Residues 224-276 (AMNPIDHPHGGGEGKTSGGRNPVTPWGVPTKGKKTRKRNKSSNKYIKRVSDKG) form a disordered region. A compositionally biased stretch (basic residues) spans 254–270 (KGKKTRKRNKSSNKYIK).

This sequence belongs to the universal ribosomal protein uL2 family. As to quaternary structure, part of the 50S ribosomal subunit. Forms a bridge to the 30S subunit in the 70S ribosome.

Its function is as follows. One of the primary rRNA binding proteins. Required for association of the 30S and 50S subunits to form the 70S ribosome, for tRNA binding and peptide bond formation. It has been suggested to have peptidyltransferase activity; this is somewhat controversial. Makes several contacts with the 16S rRNA in the 70S ribosome. The protein is Large ribosomal subunit protein uL2 of Ehrlichia canis (strain Jake).